Here is a 78-residue protein sequence, read N- to C-terminus: Probable Fe(2+)-trafficking protein (78 aa).

The protein belongs to the Fe(2+)-trafficking protein family. As to quaternary structure, monomer.

Functionally, could be a mediator in iron transactions between iron acquisition and iron-requiring processes, such as synthesis and/or repair of Fe-S clusters in biosynthetic enzymes. This Buchnera aphidicola subsp. Schizaphis graminum (strain Sg) protein is Probable Fe(2+)-trafficking protein.